The following is a 560-amino-acid chain: DNA ligase B (560 aa).

K124 functions as the N6-AMP-lysine intermediate in the catalytic mechanism.

The protein belongs to the NAD-dependent DNA ligase family. LigB subfamily.

The catalysed reaction is NAD(+) + (deoxyribonucleotide)n-3'-hydroxyl + 5'-phospho-(deoxyribonucleotide)m = (deoxyribonucleotide)n+m + AMP + beta-nicotinamide D-nucleotide.. Its function is as follows. Catalyzes the formation of phosphodiester linkages between 5'-phosphoryl and 3'-hydroxyl groups in double-stranded DNA using NAD as a coenzyme and as the energy source for the reaction. In Escherichia coli (strain SMS-3-5 / SECEC), this protein is DNA ligase B.